The primary structure comprises 407 residues: Multifunctional CCA protein (407 aa).

2 residues coordinate ATP: glycine 8 and arginine 11. CTP contacts are provided by glycine 8 and arginine 11. The Mg(2+) site is built by aspartate 21 and aspartate 23. ATP is bound by residues arginine 91, arginine 137, and arginine 140. 3 residues coordinate CTP: arginine 91, arginine 137, and arginine 140. Residues 228–329 form the HD domain; the sequence is TGVHALMALA…VALFDRVDAW (102 aa).

Belongs to the tRNA nucleotidyltransferase/poly(A) polymerase family. Bacterial CCA-adding enzyme type 1 subfamily. As to quaternary structure, monomer. Can also form homodimers and oligomers. It depends on Mg(2+) as a cofactor. Ni(2+) is required as a cofactor.

It catalyses the reaction a tRNA precursor + 2 CTP + ATP = a tRNA with a 3' CCA end + 3 diphosphate. It carries out the reaction a tRNA with a 3' CCA end + 2 CTP + ATP = a tRNA with a 3' CCACCA end + 3 diphosphate. In terms of biological role, catalyzes the addition and repair of the essential 3'-terminal CCA sequence in tRNAs without using a nucleic acid template. Adds these three nucleotides in the order of C, C, and A to the tRNA nucleotide-73, using CTP and ATP as substrates and producing inorganic pyrophosphate. tRNA 3'-terminal CCA addition is required both for tRNA processing and repair. Also involved in tRNA surveillance by mediating tandem CCA addition to generate a CCACCA at the 3' terminus of unstable tRNAs. While stable tRNAs receive only 3'-terminal CCA, unstable tRNAs are marked with CCACCA and rapidly degraded. This Erwinia tasmaniensis (strain DSM 17950 / CFBP 7177 / CIP 109463 / NCPPB 4357 / Et1/99) protein is Multifunctional CCA protein.